Here is a 307-residue protein sequence, read N- to C-terminus: Ribonuclease Z (307 aa).

Zn(2+) contacts are provided by His-61, His-63, Asp-65, His-66, His-138, Asp-208, and His-264. The active-site Proton acceptor is Asp-65.

Belongs to the RNase Z family. In terms of assembly, homodimer. Zn(2+) is required as a cofactor.

The enzyme catalyses Endonucleolytic cleavage of RNA, removing extra 3' nucleotides from tRNA precursor, generating 3' termini of tRNAs. A 3'-hydroxy group is left at the tRNA terminus and a 5'-phosphoryl group is left at the trailer molecule.. Functionally, zinc phosphodiesterase, which displays some tRNA 3'-processing endonuclease activity. Probably involved in tRNA maturation, by removing a 3'-trailer from precursor tRNA. Also shows activity toward a broad range of substrates, such as intron containing pre-tRNAs, 5' extended precursors and non-RNA substrates. This chain is Ribonuclease Z, found in Pyrococcus furiosus (strain ATCC 43587 / DSM 3638 / JCM 8422 / Vc1).